The chain runs to 326 residues: HTH-type transcriptional regulator SyrM (326 aa).

One can recognise an HTH lysR-type domain in the interval 32 to 89 (IDLNLLVDLEALLQYRHITQAAQHVGRSQPAMSRALSRLRGMLKDDLLVAGSRGLVLT). A DNA-binding region (H-T-H motif) is located at residues 49 to 68 (ITQAAQHVGRSQPAMSRALS).

It belongs to the LysR transcriptional regulatory family.

Functionally, acts in trans to stimulate nod gene expression via nodD3 and exo gene expression via SyrA. The protein is HTH-type transcriptional regulator SyrM (syrM) of Rhizobium meliloti (strain 1021) (Ensifer meliloti).